Reading from the N-terminus, the 310-residue chain is Protein A56 (310 aa).

Residues 1–16 (MKQLSIVILLLSIVYT) form the signal peptide. Topologically, residues 17–275 (TKPHPTQISK…TKYTTSDFIE (259 aa)) are virion surface. Positions 19-121 (PHPTQISKKL…TNDTDKIDYE (103 aa)) constitute an Ig-like V-type domain. An intrachain disulfide couples C36 to C105. 3 N-linked (GlcNAc...) asparagine; by host glycosylation sites follow: N39, N113, and N133. The disordered stretch occupies residues 153–195 (HTEEQHDSDTTICTSESTTQISETSESTTSSQISETSESTSYG). Low complexity predominate over residues 162–193 (TTICTSESTTQISETSESTTSSQISETSESTS). The N-linked (GlcNAc...) asparagine; by host glycan is linked to N203. A helical membrane pass occupies residues 276-300 (IFGIVSLILLLAVAIFCIIYYFCSG). The Intravirion portion of the chain corresponds to 301-310 (RSRKQETNIL).

In terms of assembly, heterodimerizes with K2. The heterodimer A56/K2 interacts with components of the entry fusion complex A16 and G9. Interacts with K2 protein. Heterodimer with C3/VPC protein; disulfide-linked. In terms of processing, glycosylated; contains phosphate and sulfate-substituted glycans. O-glycosylation is required for hemagglutination and hemadsorption activities of infected cell membranes.

It localises to the virion membrane. The protein localises to the host membrane. Its function is as follows. Prevents cell to cell fusion by interacting with and directing the viral K2 protein on the host plasma membrane. The A56-K2 complex associates with components of the entry fusion complex (EFC) presumably to avoid superinfection and syncytium formation. Via its interaction with C3/VCP protein, protects the infected cell and probably also the extracellular enveloped virus from complement attack. This Raccoon poxvirus (RCN) protein is Protein A56 (HA).